A 339-amino-acid chain; its full sequence is Serine/threonine-protein kinase SRK2J (339 aa).

One can recognise a Protein kinase domain in the interval 4 to 260 (YEMVKDLGFG…LKEIKSHAWF (257 aa)). ATP contacts are provided by residues 10-18 (LGFGNFGLA) and Lys-33. Catalysis depends on Asp-123, which acts as the Proton acceptor. A disordered region spans residues 308–339 (SRPVESLGSDKKDDDEEEYLDANDEEWYDDYA). The span at 320 to 339 (DDDEEEYLDANDEEWYDDYA) shows a compositional bias: acidic residues.

The protein belongs to the protein kinase superfamily. Ser/Thr protein kinase family. In terms of tissue distribution, expressed in seedlings.

It carries out the reaction L-seryl-[protein] + ATP = O-phospho-L-seryl-[protein] + ADP + H(+). The enzyme catalyses L-threonyl-[protein] + ATP = O-phospho-L-threonyl-[protein] + ADP + H(+). In Arabidopsis thaliana (Mouse-ear cress), this protein is Serine/threonine-protein kinase SRK2J (SRK2J).